We begin with the raw amino-acid sequence, 1220 residues long: Pesticidal crystal protein Cry5Ac (1220 aa).

Positions 1194 to 1220 are disordered; the sequence is PLPTDDQNSEGNTAFSTNSDTSMNNNQ. The segment covering 1198-1220 has biased composition (polar residues); sequence DDQNSEGNTAFSTNSDTSMNNNQ.

This sequence belongs to the delta endotoxin family.

Functionally, promotes colloidosmotic lysis by binding to the midgut epithelial cells of hymenopteran species. In Bacillus thuringiensis, this protein is Pesticidal crystal protein Cry5Ac (cry5Ac).